A 291-amino-acid chain; its full sequence is Protease HtpX (291 aa).

Transmembrane regions (helical) follow at residues I4–L24 and G36–I56. H142 is a Zn(2+) binding site. Residue E143 is part of the active site. H146 provides a ligand contact to Zn(2+). 2 consecutive transmembrane segments (helical) span residues G150–A170 and F193–W213. Zn(2+) is bound at residue E219.

This sequence belongs to the peptidase M48B family. The cofactor is Zn(2+).

The protein resides in the cell inner membrane. This chain is Protease HtpX, found in Pseudomonas aeruginosa (strain LESB58).